The sequence spans 157 residues: MFEVLMYLFENYIHNDAGLFIEPNELTDELLRAGFNQAEIFKALDWLEQLAELQHSDTSPYLITDSPQTMRIFTDHECKMLDVQCRNFLMFVERIGVTNGITREMVMDRLAALDKSFIGLDDLKWVVLMVLFNIPGAEVACEQMEDLIFDQPGDLLH.

This sequence belongs to the Smg family.

This chain is Protein Smg homolog, found in Pseudoalteromonas translucida (strain TAC 125).